A 73-amino-acid chain; its full sequence is MAKKEDTIVLEGRVQELLPGMHFKILLENGMPVTAHLCGKMRMSNIRLLVGDRVTVEMSAYDLTKARVVYRHR.

An S1-like domain is found at 1–73 (MAKKEDTIVL…TKARVVYRHR (73 aa)).

The protein belongs to the IF-1 family. Component of the 30S ribosomal translation pre-initiation complex which assembles on the 30S ribosome in the order IF-2 and IF-3, IF-1 and N-formylmethionyl-tRNA(fMet); mRNA recruitment can occur at any time during PIC assembly.

The protein resides in the cytoplasm. Its function is as follows. One of the essential components for the initiation of protein synthesis. Stabilizes the binding of IF-2 and IF-3 on the 30S subunit to which N-formylmethionyl-tRNA(fMet) subsequently binds. Helps modulate mRNA selection, yielding the 30S pre-initiation complex (PIC). Upon addition of the 50S ribosomal subunit IF-1, IF-2 and IF-3 are released leaving the mature 70S translation initiation complex. This Chlamydia caviae (strain ATCC VR-813 / DSM 19441 / 03DC25 / GPIC) (Chlamydophila caviae) protein is Translation initiation factor IF-1.